We begin with the raw amino-acid sequence, 390 residues long: MLLKKIFLTGIIVLDLVFFVSYGFAARLKDIASISGVRENQLIGYGLVVGLAGTGDDVKNGFTSESLSNLLNRQGISMKNKTLKADNIAAVMVTSSLPAFAKIGARIDATVSSIGDAKSLHGGTLLMTPLRGVDGEIYAVAQGPVTLGGYAVGGANSSTGKNHASAGRVSSGVLVERELKYDFDRLRSFTLNLLQPDFTTSACLADVMNKTLGQHVEAKQVDSFSVDVRMKEATGGNLMNIISMMENLDVPVDSKSVVVMNEKTGTVVMGENVRISTVAVAHGNLSIQIKEDIRVSQPLPFSPLSSKGNQPAMDKKTGTIVAPGGQTVVTLDTTVGIEEEKKQVMVISKGVTIQEVVKALNALGVSPRDLITIMQTIKAAGALQAELKII.

The N-terminal stretch at 1-25 is a signal peptide; it reads MLLKKIFLTGIIVLDLVFFVSYGFA.

This sequence belongs to the FlgI family. In terms of assembly, the basal body constitutes a major portion of the flagellar organelle and consists of four rings (L,P,S, and M) mounted on a central rod.

Its subcellular location is the periplasm. It is found in the bacterial flagellum basal body. In terms of biological role, assembles around the rod to form the L-ring and probably protects the motor/basal body from shearing forces during rotation. The polypeptide is Flagellar P-ring protein (Syntrophus aciditrophicus (strain SB)).